The chain runs to 452 residues: Probable 1,4-beta-D-glucan cellobiohydrolase A (452 aa).

The signal sequence occupies residues 1 to 17 (MHQRALLFSALLTAVRA). N-linked (GlcNAc...) asparagine glycosylation is present at asparagine 62. Glutamate 227 serves as the catalytic Nucleophile. Catalysis depends on glutamate 232, which acts as the Proton donor. 4 N-linked (GlcNAc...) asparagine glycosylation sites follow: asparagine 285, asparagine 335, asparagine 402, and asparagine 445.

It belongs to the glycosyl hydrolase 7 (cellulase C) family.

Its subcellular location is the secreted. It catalyses the reaction Hydrolysis of (1-&gt;4)-beta-D-glucosidic linkages in cellulose and cellotetraose, releasing cellobiose from the non-reducing ends of the chains.. Functionally, the biological conversion of cellulose to glucose generally requires three types of hydrolytic enzymes: (1) Endoglucanases which cut internal beta-1,4-glucosidic bonds; (2) Exocellobiohydrolases that cut the disaccharide cellobiose from the non-reducing end of the cellulose polymer chain; (3) Beta-1,4-glucosidases which hydrolyze the cellobiose and other short cello-oligosaccharides to glucose. The protein is Probable 1,4-beta-D-glucan cellobiohydrolase A (cbhA) of Aspergillus niger (strain ATCC MYA-4892 / CBS 513.88 / FGSC A1513).